Consider the following 323-residue polypeptide: MSFASETKKELTHMDVSDSDAKVELAAFIRMNGAISFSNQLVIMDVQTENAAIARRMYQLLKDLYEVPIELLVRRKMKLKKNNVYIVRLKSGTRGILEDLRILEPPMTFTKSIDRGFVKKRSAKRAYLRGAFLASGSVNNPETSSYHLEIFSVYEEHNEAICALMNQFDLNARTLERKNGFITYLKEAEKITEFLSIIGATSALLHFEDVRIMRDMRNSVNRLVNCETANLNKTINAAVRQIDNIKYIQSTVGLEALPERLREIAALRIANEDVTLKELGEMLTTGQVSKSGINHRLRKLDQIAERLRSGETPAQVGLKISNS.

The segment at residues Thr275–Ser309 is a DNA-binding region (H-T-H motif).

It belongs to the WhiA family.

Involved in cell division and chromosome segregation. This is Probable cell division protein WhiA from Listeria monocytogenes serotype 4b (strain CLIP80459).